The sequence spans 130 residues: 3-aminoacrylate deaminase RutC (130 aa).

The protein belongs to the RutC family.

It catalyses the reaction (Z)-3-aminoacrylate + H2O + H(+) = 3-oxopropanoate + NH4(+). Involved in pyrimidine catabolism. Catalyzes the deamination of 3-aminoacrylate to malonic semialdehyde, a reaction that can also occur spontaneously. RutC may facilitate the reaction and modulate the metabolic fitness, rather than catalyzing essential functions. This chain is 3-aminoacrylate deaminase RutC, found in Haliangium ochraceum (strain DSM 14365 / JCM 11303 / SMP-2).